The following is a 384-amino-acid chain: Acetylgalactosaminyl-O-glycosyl-glycoprotein beta-1,3-N-acetylglucosaminyltransferase (384 aa).

The Cytoplasmic segment spans residues 1–12 (MAFPCRRSLTAK). A helical; Signal-anchor for type II membrane protein membrane pass occupies residues 13–31 (TLACLLVGVSFLALQQWFL). Residues 32–384 (QAPRSPREER…LSCDRGHRVS (353 aa)) lie on the Lumenal side of the membrane. The tract at residues 34-68 (PRSPREERSPQEETPEGPTDAPAADEPPSELVPGP) is disordered. N73, N77, and N196 each carry an N-linked (GlcNAc...) asparagine glycan.

Belongs to the glycosyltransferase 31 family. In terms of tissue distribution, present in stomach and colon (at protein level). Restricted in the stomach, colon and small intestine, where core 3 structure is present.

It is found in the golgi apparatus membrane. It catalyses the reaction a 3-O-[N-acetyl-alpha-D-galactosaminyl]-L-threonyl-[protein] + UDP-N-acetyl-alpha-D-glucosamine = a 3-O-[N-acetyl-beta-D-glucosaminyl-(1-&gt;3)-N-acetyl-alpha-D-galactosaminyl]-L-threonyl-[protein] + UDP + H(+). The catalysed reaction is a 3-O-[N-acetyl-alpha-D-galactosaminyl]-L-seryl-[protein] + UDP-N-acetyl-alpha-D-glucosamine = 3-O-[N-acetyl-beta-D-glucosaminyl-(1-&gt;3)-N-acetyl-alpha-D-galactosaminyl]-L-seryl-[protein] + UDP + H(+). It functions in the pathway protein modification; protein glycosylation. In terms of biological role, beta-1,3-N-acetylglucosaminyltransferase that synthesizes the core 3 structure of the O-glycan, an important precursor in the biosynthesis of mucin-type glycoproteins. Plays an important role in the synthesis of mucin-type O-glycans in digestive organs. The chain is Acetylgalactosaminyl-O-glycosyl-glycoprotein beta-1,3-N-acetylglucosaminyltransferase (B3GNT6) from Homo sapiens (Human).